We begin with the raw amino-acid sequence, 852 residues long: Alanine--tRNA ligase (852 aa).

Histidine 554, histidine 558, cysteine 656, and histidine 660 together coordinate Zn(2+).

It belongs to the class-II aminoacyl-tRNA synthetase family. Requires Zn(2+) as cofactor.

The protein resides in the cytoplasm. The enzyme catalyses tRNA(Ala) + L-alanine + ATP = L-alanyl-tRNA(Ala) + AMP + diphosphate. Catalyzes the attachment of alanine to tRNA(Ala) in a two-step reaction: alanine is first activated by ATP to form Ala-AMP and then transferred to the acceptor end of tRNA(Ala). Also edits incorrectly charged Ser-tRNA(Ala) and Gly-tRNA(Ala) via its editing domain. This chain is Alanine--tRNA ligase, found in Campylobacter concisus (strain 13826).